The sequence spans 230 residues: Ribonuclease 3 (230 aa).

In terms of domain architecture, RNase III spans 5-125 (YSRFYNILGY…VIGAIYLDSD (121 aa)). Glu40 serves as a coordination point for Mg(2+). Asp44 is an active-site residue. The Mg(2+) site is built by Asp111 and Glu114. Residue Glu114 is part of the active site. The DRBM domain maps to 153–223 (DSKSKLQEIL…AEKMIEMLSQ (71 aa)).

This sequence belongs to the ribonuclease III family. As to quaternary structure, homodimer. The cofactor is Mg(2+).

The protein localises to the cytoplasm. The enzyme catalyses Endonucleolytic cleavage to 5'-phosphomonoester.. Its function is as follows. Digests double-stranded RNA. Involved in the processing of primary rRNA transcript to yield the immediate precursors to the large and small rRNAs (23S and 16S). Processes some mRNAs, and tRNAs when they are encoded in the rRNA operon. Processes pre-crRNA and tracrRNA of type II CRISPR loci if present in the organism. The sequence is that of Ribonuclease 3 from Francisella tularensis subsp. tularensis (strain WY96-3418).